Consider the following 620-residue polypeptide: Bicaudal D-related protein homolog (620 aa).

The segment covering 23-41 has biased composition (low complexity); it reads NNNNNSIVGGSSSSSSGGN. Residues 23–53 form a disordered region; sequence NNNNNSIVGGSSSSSSGGNKSKRPRQFGQYS. Coiled-coil stretches lie at residues 120 to 331 and 461 to 575; these read AAEL…LSER and VLEQ…LIDE. Composition is skewed to basic and acidic residues over residues 493–503 and 509–528; these read KEERDQARGDL and RDEL…DRRT. Positions 493 to 528 are disordered; that stretch reads KEERDQARGDLEDNTDRDELLSKAQTERDAANDRRT.

This sequence belongs to the BICDR family. May homodimerize but does not interact with BicD. May interact with eEF1gamma; The interaction is probably indirect.

Functions redundantly with BicD. Involved in formation and/or development of mechanosensory organs during metamorphosis. During macrochaetae development, together with BicD, involved in Rab 6 and Spn-F stability and distribution and actin cytoskeleton organization. The chain is Bicaudal D-related protein homolog from Drosophila melanogaster (Fruit fly).